Reading from the N-terminus, the 91-residue chain is Small ribosomal subunit protein bS18 (91 aa).

It belongs to the bacterial ribosomal protein bS18 family. Part of the 30S ribosomal subunit. Forms a tight heterodimer with protein bS6.

Its function is as follows. Binds as a heterodimer with protein bS6 to the central domain of the 16S rRNA, where it helps stabilize the platform of the 30S subunit. This chain is Small ribosomal subunit protein bS18, found in Thiobacillus denitrificans (strain ATCC 25259 / T1).